A 248-amino-acid chain; its full sequence is Probable transcriptional regulatory protein Pfl01_4410 (248 aa).

It belongs to the TACO1 family.

The protein resides in the cytoplasm. This Pseudomonas fluorescens (strain Pf0-1) protein is Probable transcriptional regulatory protein Pfl01_4410.